The sequence spans 243 residues: Cell division protein FtsQ (243 aa).

Residues 1-19 lie on the Cytoplasmic side of the membrane; sequence MKRYNAKRKTHRNLKSIKK. The helical transmembrane segment at 20 to 40 threads the bilayer; that stretch reads LIPTVLALLAFVSLLAGIITL. Residues 41–243 are Periplasmic-facing; it reads HNPKTLPFRQ…SNGLAIQWKN (203 aa). One can recognise a POTRA domain in the interval 46-115; it reads LPFRQIKITV…NELEIQVEEQ (70 aa).

It belongs to the FtsQ/DivIB family. FtsQ subfamily. Part of a complex composed of FtsB, FtsL and FtsQ.

It localises to the cell inner membrane. Functionally, essential cell division protein. May link together the upstream cell division proteins, which are predominantly cytoplasmic, with the downstream cell division proteins, which are predominantly periplasmic. May control correct divisome assembly. In Coxiella burnetii (strain RSA 493 / Nine Mile phase I), this protein is Cell division protein FtsQ.